We begin with the raw amino-acid sequence, 100 residues long: Urease subunit gamma (100 aa).

This sequence belongs to the urease gamma subunit family. In terms of assembly, heterotrimer of UreA (gamma), UreB (beta) and UreC (alpha) subunits. Three heterotrimers associate to form the active enzyme.

It localises to the cytoplasm. The enzyme catalyses urea + 2 H2O + H(+) = hydrogencarbonate + 2 NH4(+). Its pathway is nitrogen metabolism; urea degradation; CO(2) and NH(3) from urea (urease route): step 1/1. The chain is Urease subunit gamma from Delftia acidovorans (strain DSM 14801 / SPH-1).